The primary structure comprises 396 residues: Elongation factor Tu (396 aa).

The 197-residue stretch at 10-206 (KAHVNIGTIG…AVDEYIPDPV (197 aa)) folds into the tr-type G domain. Positions 19–26 (GHVDHGKT) are G1. A GTP-binding site is contributed by 19 to 26 (GHVDHGKT). Threonine 26 is a Mg(2+) binding site. A G2 region spans residues 62-66 (GITIN). Residues 83 to 86 (DAPG) are G3. GTP-binding positions include 83–87 (DAPGH) and 138–141 (NKSD). Positions 138 to 141 (NKSD) are G4. Residues 176-178 (SAL) are G5.

It belongs to the TRAFAC class translation factor GTPase superfamily. Classic translation factor GTPase family. EF-Tu/EF-1A subfamily. Monomer.

Its subcellular location is the cytoplasm. It catalyses the reaction GTP + H2O = GDP + phosphate + H(+). Functionally, GTP hydrolase that promotes the GTP-dependent binding of aminoacyl-tRNA to the A-site of ribosomes during protein biosynthesis. This chain is Elongation factor Tu, found in Micrococcus luteus (Micrococcus lysodeikticus).